Here is a 216-residue protein sequence, read N- to C-terminus: 3-isopropylmalate dehydratase small subunit (216 aa).

This sequence belongs to the LeuD family. LeuD type 1 subfamily. As to quaternary structure, heterodimer of LeuC and LeuD.

The enzyme catalyses (2R,3S)-3-isopropylmalate = (2S)-2-isopropylmalate. It participates in amino-acid biosynthesis; L-leucine biosynthesis; L-leucine from 3-methyl-2-oxobutanoate: step 2/4. In terms of biological role, catalyzes the isomerization between 2-isopropylmalate and 3-isopropylmalate, via the formation of 2-isopropylmaleate. The chain is 3-isopropylmalate dehydratase small subunit from Psychrobacter sp. (strain PRwf-1).